We begin with the raw amino-acid sequence, 166 residues long: 3-isopropylmalate dehydratase small subunit (166 aa).

This sequence belongs to the LeuD family. LeuD type 2 subfamily. Heterodimer of LeuC and LeuD.

The catalysed reaction is (2R,3S)-3-isopropylmalate = (2S)-2-isopropylmalate. It functions in the pathway amino-acid biosynthesis; L-leucine biosynthesis; L-leucine from 3-methyl-2-oxobutanoate: step 2/4. Its function is as follows. Catalyzes the isomerization between 2-isopropylmalate and 3-isopropylmalate, via the formation of 2-isopropylmaleate. The protein is 3-isopropylmalate dehydratase small subunit of Aliarcobacter butzleri (strain RM4018) (Arcobacter butzleri).